The following is a 405-amino-acid chain: L-carnitine CoA-transferase (405 aa).

Positions 97 and 104 each coordinate CoA. D169 serves as the catalytic Nucleophile.

Belongs to the CoA-transferase III family. CaiB subfamily. As to quaternary structure, homodimer.

Its subcellular location is the cytoplasm. The catalysed reaction is crotonobetainyl-CoA + (R)-carnitine = crotonobetaine + (R)-carnitinyl-CoA. It catalyses the reaction 4-(trimethylamino)butanoyl-CoA + (R)-carnitine = (R)-carnitinyl-CoA + 4-(trimethylamino)butanoate. It participates in amine and polyamine metabolism; carnitine metabolism. In terms of biological role, catalyzes the reversible transfer of the CoA moiety from gamma-butyrobetainyl-CoA to L-carnitine to generate L-carnitinyl-CoA and gamma-butyrobetaine. Is also able to catalyze the reversible transfer of the CoA moiety from gamma-butyrobetainyl-CoA or L-carnitinyl-CoA to crotonobetaine to generate crotonobetainyl-CoA. The sequence is that of L-carnitine CoA-transferase from Escherichia coli O17:K52:H18 (strain UMN026 / ExPEC).